Reading from the N-terminus, the 904-residue chain is Protein argonaute 4A (904 aa).

2 disordered regions span residues 1 to 33 (MESN…KKLS) and 143 to 166 (KSSA…VRRP). The span at 11 to 21 (LPPPPPLPPNA) shows a compositional bias: pro residues. Residues 144–156 (SSANGGSPGNDSP) are compositionally biased toward low complexity. The region spanning 274 to 388 (PVVDFLLANQ…FPIELCSLVP (115 aa)) is the PAZ domain. Residues 557–865 (FLLCVLAERK…AAAQVSQFIK (309 aa)) form the Piwi domain. Positions 871–890 (ETSSSHGGHTSAGSAPVPEL) are disordered. Residues 872–885 (TSSSHGGHTSAGSA) are compositionally biased toward low complexity.

It belongs to the argonaute family. Ago subfamily.

Functionally, probably involved in the RNA silencing pathway. May bind to short RNAs such as microRNAs (miRNAs) or short interfering RNAs (siRNAs), and represses the translation of mRNAs which are complementary to them. The protein is Protein argonaute 4A (AGO4A) of Oryza sativa subsp. japonica (Rice).